The following is a 493-amino-acid chain: MESGEHDSETMYEPYIPPIINKVNTILRSHCRQCVLDLIFKKIKEENVHCYGDYVRYMLIGYDSNRIRVRFKSEFQATFFRKQLEIYLSVKNYGDYEDSNCSTMRVRPKYSNKYFRNFILSNEYIMKLFEQIHQSRTSYLLNKLRKQFKKTRFYLEFYYETSLNYTNYEYIPVNCDFDVDTLMVDKQIYEKPNPEDFIVINPKCKVENVINNINNMQFIILTKNGSPLIQHYSEDIVTGNYDDDYYKFYLDELMGRSHCIDRYSASGKRILSRKEIMEDEGWVCINLPCPNQNCVLFENTIGICCDNDETVSSNSLNMVNFGPDDKNSATNPTHLSKESQNNSESNSESITESPLNSFIQRSGNREDSEISQDNDTVQIDKSTSSDSVHNYFDNSVDNSVHDSVHDSVDTIGQTRRDNASTNRPLYSEYDNFLRTTMDTIKTVYQKKIFDGDSDKIKHSRFSVNQIYDRVEYTDNHDCHDHHDSEISTNNIFG.

The tract at residues 316–403 (LNMVNFGPDD…NSVDNSVHDS (88 aa)) is disordered. Low complexity predominate over residues 338–353 (ESQNNSESNSESITES). The span at 371-398 (SQDNDTVQIDKSTSSDSVHNYFDNSVDN) shows a compositional bias: polar residues.

It belongs to the mimivirus R69 family.

This is an uncharacterized protein from Acanthamoeba polyphaga (Amoeba).